Reading from the N-terminus, the 301-residue chain is Acetyl-coenzyme A carboxylase carboxyl transferase subunit beta (301 aa).

Positions 25–294 constitute a CoA carboxyltransferase N-terminal domain; it reads LWIKDPSTGE…NSDAPAPQKP (270 aa).

It belongs to the AccD/PCCB family. Acetyl-CoA carboxylase is a heterohexamer composed of biotin carboxyl carrier protein (AccB), biotin carboxylase (AccC) and two subunits each of ACCase subunit alpha (AccA) and ACCase subunit beta (AccD).

The protein resides in the cytoplasm. The catalysed reaction is N(6)-carboxybiotinyl-L-lysyl-[protein] + acetyl-CoA = N(6)-biotinyl-L-lysyl-[protein] + malonyl-CoA. Its pathway is lipid metabolism; malonyl-CoA biosynthesis; malonyl-CoA from acetyl-CoA: step 1/1. Functionally, component of the acetyl coenzyme A carboxylase (ACC) complex. Biotin carboxylase (BC) catalyzes the carboxylation of biotin on its carrier protein (BCCP) and then the CO(2) group is transferred by the transcarboxylase to acetyl-CoA to form malonyl-CoA. In Brucella canis (strain ATCC 23365 / NCTC 10854 / RM-666), this protein is Acetyl-coenzyme A carboxylase carboxyl transferase subunit beta.